We begin with the raw amino-acid sequence, 470 residues long: L-seryl-tRNA(Sec) selenium transferase (470 aa).

K292 is subject to N6-(pyridoxal phosphate)lysine.

This sequence belongs to the SelA family. It depends on pyridoxal 5'-phosphate as a cofactor.

The protein resides in the cytoplasm. It catalyses the reaction L-seryl-tRNA(Sec) + selenophosphate + H(+) = L-selenocysteinyl-tRNA(Sec) + phosphate. Its pathway is aminoacyl-tRNA biosynthesis; selenocysteinyl-tRNA(Sec) biosynthesis; selenocysteinyl-tRNA(Sec) from L-seryl-tRNA(Sec) (bacterial route): step 1/1. Converts seryl-tRNA(Sec) to selenocysteinyl-tRNA(Sec) required for selenoprotein biosynthesis. This is L-seryl-tRNA(Sec) selenium transferase from Moorella thermoacetica (strain ATCC 39073 / JCM 9320).